Here is a 339-residue protein sequence, read N- to C-terminus: Putative phosphate acyltransferase (339 aa).

Belongs to the PlsX family. As to quaternary structure, homodimer. Probably interacts with PlsY.

Its subcellular location is the cytoplasm. It catalyses the reaction a fatty acyl-[ACP] + phosphate = an acyl phosphate + holo-[ACP]. Its pathway is lipid metabolism; phospholipid metabolism. Functionally, catalyzes the reversible formation of acyl-phosphate (acyl-PO(4)) from acyl-[acyl-carrier-protein] (acyl-ACP). This enzyme utilizes acyl-ACP as fatty acyl donor, but not acyl-CoA. The sequence is that of Putative phosphate acyltransferase from Clostridium perfringens (strain 13 / Type A).